A 243-amino-acid polypeptide reads, in one-letter code: Aldehyde decarbonylase (243 aa).

5 residues coordinate Fe cation: E45, E73, H76, E128, and H160.

Belongs to the aldehyde decarbonylase family. Binds 2 metal cations per subunit. The catalytic dinuclear metal-binding site could be either a di-iron or a manganese-iron cofactor. serves as cofactor.

The catalysed reaction is a long-chain fatty aldehyde + 2 NADPH + O2 + H(+) = a long-chain alkane + formate + 2 NADP(+) + H2O. In terms of biological role, catalyzes the decarbonylation of fatty aldehydes to alkanes. Requires the presence of ferredoxin, ferredoxin reductase and NADPH for in vitro decarbonylase activity. Involved in the biosynthesis of alkanes, mainly heptadecane and pentadecane. This is Aldehyde decarbonylase from Prochlorococcus marinus (strain MIT 9313).